The chain runs to 358 residues: DNA primase large subunit PriL (358 aa).

[4Fe-4S] cluster-binding residues include Cys234, Cys306, Cys315, and Cys322. The disordered stretch occupies residues 335–358; the sequence is KLDDTDEEELVDWREDEGEEEADA. A compositionally biased stretch (acidic residues) spans 338-358; sequence DTDEEELVDWREDEGEEEADA.

This sequence belongs to the eukaryotic-type primase large subunit family. Heterodimer of a small subunit (PriS) and a large subunit (PriL). It depends on [4Fe-4S] cluster as a cofactor.

Its function is as follows. Regulatory subunit of DNA primase, an RNA polymerase that catalyzes the synthesis of short RNA molecules used as primers for DNA polymerase during DNA replication. Stabilizes and modulates the activity of the small subunit, increasing the rate of DNA synthesis, and conferring RNA synthesis capability. The DNA polymerase activity may enable DNA primase to also catalyze primer extension after primer synthesis. May also play a role in DNA repair. The sequence is that of DNA primase large subunit PriL from Haloarcula marismortui (strain ATCC 43049 / DSM 3752 / JCM 8966 / VKM B-1809) (Halobacterium marismortui).